The sequence spans 83 residues: MSQPLNADQELVSDVVACQLVIKQILDVLDVIAPVEVREKMSSQLKNIDFTNHPAAADPVTMRAIQKAIALIELKFTPQGESH.

This is an uncharacterized protein from Escherichia coli (strain K12).